We begin with the raw amino-acid sequence, 370 residues long: Aminomethyltransferase (370 aa).

Belongs to the GcvT family. In terms of assembly, the glycine cleavage system is composed of four proteins: P, T, L and H.

It carries out the reaction N(6)-[(R)-S(8)-aminomethyldihydrolipoyl]-L-lysyl-[protein] + (6S)-5,6,7,8-tetrahydrofolate = N(6)-[(R)-dihydrolipoyl]-L-lysyl-[protein] + (6R)-5,10-methylene-5,6,7,8-tetrahydrofolate + NH4(+). Its function is as follows. The glycine cleavage system catalyzes the degradation of glycine. In Clostridium botulinum (strain Okra / Type B1), this protein is Aminomethyltransferase.